The chain runs to 475 residues: Methyltransferase-like protein 25B (475 aa).

A coiled-coil region spans residues 185-210 (NKRLVARAQRLDQELLQALDKMEKRH). Residues 406 to 426 (VVAFFSLALLLAPLVETLILL) traverse the membrane as a helical segment.

It belongs to the METTL25 family.

It localises to the membrane. This is Methyltransferase-like protein 25B from Rattus norvegicus (Rat).